A 604-amino-acid chain; its full sequence is Serine/threonine-protein kinase A-Raf (604 aa).

The RBD domain occupies 19-91; that stretch reads GTVKVYLPNK…DGEELIVEVL (73 aa). The Phorbol-ester/DAG-type zinc finger occupies 98 to 144; it reads MHNFVRKTFFSLAFCDFCLKFLFHGFRCQTCGYKFHQHCSSKVPTVC. Residues His99, Cys112, Cys115, Cys125, Cys128, His133, Cys136, and Cys144 each contribute to the Zn(2+) site. Phosphoserine is present on residues Ser157 and Ser162. Disordered regions lie at residues 177–222 and 241–288; these read NELL…HMVS and TDAA…EKKK. Thr181 bears the Phosphothreonine mark. Ser186 is modified (phosphoserine). The segment covering 210 to 222 has biased composition (polar residues); sequence IRSTSTPNVHMVS. Residues 252 to 265 show a composition bias toward low complexity; it reads PRGSPSPASVSSGR. Phosphoserine occurs at positions 255 and 267. A compositionally biased stretch (basic and acidic residues) spans 272-287; the sequence is LPSEQRERKSLADEKK. The Protein kinase domain maps to 308-568; the sequence is VQLLKRIGTG…PQILATIELL (261 aa). ATP contacts are provided by residues 314–322 and Lys334; that span reads IGTGSFGTV. Position 316 is a phosphothreonine (Thr316). The Proton acceptor role is filled by Asp427.

This sequence belongs to the protein kinase superfamily. TKL Ser/Thr protein kinase family. RAF subfamily. As to quaternary structure, interacts with TH1L/NELFD. Zn(2+) is required as a cofactor. In terms of processing, dephosphorylation by the SHOC2-MRAS-PP1c (SMP) complex consisting of SHOC2, GTP-bound M-Ras/MRAS and the catalytic subunit of protein phosphatase 1 (PPP1CA, PPP1CB or PPP1CC); this relieves inactivation and stimulates kinase activity.

The catalysed reaction is L-seryl-[protein] + ATP = O-phospho-L-seryl-[protein] + ADP + H(+). It carries out the reaction L-threonyl-[protein] + ATP = O-phospho-L-threonyl-[protein] + ADP + H(+). Its function is as follows. Involved in the transduction of mitogenic signals from the cell membrane to the nucleus. May also regulate the TOR signaling cascade. Phosphorylates PFKFB2. The chain is Serine/threonine-protein kinase A-Raf (Araf) from Mus musculus (Mouse).